A 267-amino-acid chain; its full sequence is Probable beta-lactamase YbxI (267 aa).

The signal sequence occupies residues 1–23 (MKKWIYVVLVLSIAGIGGFSVHA). The active-site Acyl-ester intermediate is the Ser76. An N6-carboxylysine modification is found at Lys79. 214–216 (KTG) contributes to the substrate binding site.

It belongs to the class-D beta-lactamase family.

It carries out the reaction a beta-lactam + H2O = a substituted beta-amino acid. This chain is Probable beta-lactamase YbxI (ybxI), found in Bacillus subtilis (strain 168).